We begin with the raw amino-acid sequence, 102 residues long: Urease subunit beta (102 aa).

It belongs to the urease beta subunit family. Heterotrimer of UreA (gamma), UreB (beta) and UreC (alpha) subunits. Three heterotrimers associate to form the active enzyme.

Its subcellular location is the cytoplasm. The catalysed reaction is urea + 2 H2O + H(+) = hydrogencarbonate + 2 NH4(+). It participates in nitrogen metabolism; urea degradation; CO(2) and NH(3) from urea (urease route): step 1/1. The sequence is that of Urease subunit beta from Bordetella parapertussis (strain 12822 / ATCC BAA-587 / NCTC 13253).